A 401-amino-acid polypeptide reads, in one-letter code: Imidazolonepropionase (401 aa).

The Fe(3+) site is built by His-66 and His-68. The Zn(2+) site is built by His-66 and His-68. 3 residues coordinate 4-imidazolone-5-propanoate: Arg-75, Tyr-138, and His-171. Tyr-138 is a binding site for N-formimidoyl-L-glutamate. His-236 lines the Fe(3+) pocket. His-236 contributes to the Zn(2+) binding site. 4-imidazolone-5-propanoate is bound at residue Gln-239. Fe(3+) is bound at residue Asp-311. Position 311 (Asp-311) interacts with Zn(2+). Residues Asn-313 and Gly-315 each contribute to the N-formimidoyl-L-glutamate site. Residue Thr-316 participates in 4-imidazolone-5-propanoate binding.

It belongs to the metallo-dependent hydrolases superfamily. HutI family. Requires Zn(2+) as cofactor. Fe(3+) is required as a cofactor.

Its subcellular location is the cytoplasm. It catalyses the reaction 4-imidazolone-5-propanoate + H2O = N-formimidoyl-L-glutamate. It participates in amino-acid degradation; L-histidine degradation into L-glutamate; N-formimidoyl-L-glutamate from L-histidine: step 3/3. In terms of biological role, catalyzes the hydrolytic cleavage of the carbon-nitrogen bond in imidazolone-5-propanoate to yield N-formimidoyl-L-glutamate. It is the third step in the universal histidine degradation pathway. The polypeptide is Imidazolonepropionase (Pseudomonas entomophila (strain L48)).